A 118-amino-acid chain; its full sequence is Na(+)/H(+) antiporter subunit G1 (118 aa).

Helical transmembrane passes span 9 to 29, 47 to 67, and 69 to 89; these read VSIIFVVLGALISAFAATGLI, LGAMFLLFGAFLYFIGTEGYV, and MQLIIGIIFVFITGPLSSHLI.

This sequence belongs to the CPA3 antiporters (TC 2.A.63) subunit G family. In terms of assembly, may form a heterooligomeric complex that consists of seven subunits: mnhA1, mnhB1, mnhC1, mnhD1, mnhE1, mnhF1 and mnhG1.

It localises to the cell membrane. Its function is as follows. Mnh complex is a Na(+)/H(+) antiporter involved in Na(+) excretion. The protein is Na(+)/H(+) antiporter subunit G1 (mnhG1) of Staphylococcus epidermidis (strain ATCC 35984 / DSM 28319 / BCRC 17069 / CCUG 31568 / BM 3577 / RP62A).